The sequence spans 379 residues: Deoxyuridine 5'-triphosphate nucleotidohydrolase (379 aa).

The protein belongs to the dUTPase family. Mg(2+) is required as a cofactor.

It carries out the reaction dUTP + H2O = dUMP + diphosphate + H(+). Functionally, involved in nucleotide metabolism: produces dUMP, the immediate precursor of thymidine nucleotides and decreases the intracellular concentration of dUTP to avoid uracil incorporation into viral DNA. The protein is Deoxyuridine 5'-triphosphate nucleotidohydrolase of Human herpesvirus 7 (strain JI) (HHV-7).